The primary structure comprises 469 residues: 3-isopropylmalate dehydratase large subunit (469 aa).

Positions 347, 408, and 411 each coordinate [4Fe-4S] cluster.

It belongs to the aconitase/IPM isomerase family. LeuC type 1 subfamily. In terms of assembly, heterodimer of LeuC and LeuD. The cofactor is [4Fe-4S] cluster.

The catalysed reaction is (2R,3S)-3-isopropylmalate = (2S)-2-isopropylmalate. It functions in the pathway amino-acid biosynthesis; L-leucine biosynthesis; L-leucine from 3-methyl-2-oxobutanoate: step 2/4. Catalyzes the isomerization between 2-isopropylmalate and 3-isopropylmalate, via the formation of 2-isopropylmaleate. This chain is 3-isopropylmalate dehydratase large subunit, found in Haemophilus influenzae (strain ATCC 51907 / DSM 11121 / KW20 / Rd).